A 590-amino-acid chain; its full sequence is Synaptotagmin-3 (590 aa).

Topologically, residues 1–54 (MSGDYEDDLCRRALILVSDLCARVRDADTNDRCQEFNDRIRGYPRGPDADISVS) are vesicular. Residues 10–34 (CRRALILVSDLCARVRDADTNDRCQ) form a cysteine motif region. Residues 55–75 (LLSVIVTFCGIVLLGVSLFVS) form a helical membrane-spanning segment. Residues 76–590 (WKLCWVPWRD…KGLSEKENSE (515 aa)) lie on the Cytoplasmic side of the membrane. 3 disordered regions span residues 143–220 (AELL…VTSL), 234–260 (TQQT…LPGG), and 273–295 (ELYQ…GEAG). Residues 185–203 (SPELPSEGGAGSGLLLLPP) show a composition bias toward low complexity. Residues 234 to 243 (TQQTLTSQPD) show a composition bias toward polar residues. The span at 278–295 (TGPGGRRSGGGPGSGEAG) shows a compositional bias: gly residues. The residue at position 284 (Arg-284) is an Omega-N-methylarginine. C2 domains follow at residues 299–420 (PCGR…PLWR) and 431–565 (DLGE…EHWH). Residues Asp-330, Asp-336, Asp-388, Phe-389, Asp-390, Ser-393, Asp-396, Asp-462, Asp-468, Asp-522, and Asp-524 each coordinate Ca(2+).

Belongs to the synaptotagmin family. Homodimer; disulfide-linked via the cysteine motif. Can also form heterodimers with SYT6, SYT9 and SYT10. It depends on Ca(2+) as a cofactor. In terms of tissue distribution, expressed in melanocytes.

It localises to the cell membrane. The protein localises to the cytoplasmic vesicle. Its subcellular location is the secretory vesicle membrane. Its function is as follows. Ca(2+) sensor involved in Ca(2+)-dependent exocytosis of secretory vesicles through Ca(2+) and phospholipid binding to the C2 domain. Ca(2+) induces binding of the C2-domains to phospholipid membranes and to assembled SNARE-complexes; both actions contribute to triggering exocytosis. Plays a role in dendrite formation by melanocytes. The sequence is that of Synaptotagmin-3 (SYT3) from Homo sapiens (Human).